Here is a 362-residue protein sequence, read N- to C-terminus: Tyrosine recombinase XerH (362 aa).

The 98-residue stretch at 43–140 (ECLNELNQAC…ALLGLFSYID (98 aa)) folds into the Core-binding (CB) domain. The 188-residue stretch at 170–357 (KLPTHLNNEE…DKQRLEEAAS (188 aa)) folds into the Tyr recombinase domain. Catalysis depends on residues Arg-213, Lys-239, His-309, Arg-312, and His-335. The active-site O-(3'-phospho-DNA)-tyrosine intermediate is Tyr-344.

This sequence belongs to the 'phage' integrase family. XerH subfamily.

The protein resides in the cytoplasm. With respect to regulation, ftsK is required for recombination. In terms of biological role, site-specific tyrosine recombinase, which acts by catalyzing the cutting and rejoining of the recombining DNA molecules. Involved in chromosome segregation. May contribute to chromosome decatenation. The polypeptide is Tyrosine recombinase XerH (Helicobacter pylori (strain ATCC 700392 / 26695) (Campylobacter pylori)).